We begin with the raw amino-acid sequence, 149 residues long: Urease accessory protein UreE (149 aa).

This sequence belongs to the UreE family.

It is found in the cytoplasm. In terms of biological role, involved in urease metallocenter assembly. Binds nickel. Probably functions as a nickel donor during metallocenter assembly. The chain is Urease accessory protein UreE from Prochlorococcus marinus (strain MIT 9301).